We begin with the raw amino-acid sequence, 306 residues long: Ribonuclease Z (306 aa).

Zn(2+) contacts are provided by histidine 63, histidine 65, aspartate 67, histidine 68, histidine 141, aspartate 211, and histidine 269. Aspartate 67 (proton acceptor) is an active-site residue.

It belongs to the RNase Z family. In terms of assembly, homodimer. Requires Zn(2+) as cofactor.

It carries out the reaction Endonucleolytic cleavage of RNA, removing extra 3' nucleotides from tRNA precursor, generating 3' termini of tRNAs. A 3'-hydroxy group is left at the tRNA terminus and a 5'-phosphoryl group is left at the trailer molecule.. Zinc phosphodiesterase, which displays some tRNA 3'-processing endonuclease activity. Probably involved in tRNA maturation, by removing a 3'-trailer from precursor tRNA. This Macrococcus caseolyticus (strain JCSC5402) (Macrococcoides caseolyticum) protein is Ribonuclease Z.